A 116-amino-acid polypeptide reads, in one-letter code: Endocuticle structural glycoprotein SgAbd-4 (116 aa).

Pyrrolidone carboxylic acid is present on Q1. Residues 20-92 (DGSYQWNYET…PQGAHFPTPP (73 aa)) form the Chitin-binding type R&amp;R domain. O-linked (HexNAc...) threonine glycans are attached at residues T90 and T107. The O-linked (HexNAc...) serine glycan is linked to S110. A glycan (O-linked (HexNAc...) threonine) is linked at T111. At P116 the chain carries Proline amide.

Component of the abdominal endocuticle. This chain is Endocuticle structural glycoprotein SgAbd-4, found in Schistocerca gregaria (Desert locust).